Consider the following 168-residue polypeptide: Outer-membrane lipoprotein YfiB (168 aa).

An N-terminal signal peptide occupies residues 1–25 (MLPQRLHPSRLLALALFSLVLGLAG). A lipid anchor (N-palmitoyl cysteine) is attached at Cys-26. Cys-26 carries S-diacylglycerol cysteine lipidation. Positions 53–168 (EGWEFGMSSK…RRVAIIVPAE (116 aa)) constitute an OmpA-like domain.

The protein belongs to the outer membrane OOP (TC 1.B.6) superfamily. In terms of assembly, homodimer. Interacts with YfiR. The YfiB-YfiR complex is a 2:2 heterotetramer.

The protein localises to the cell outer membrane. With respect to regulation, both lipid anchor in the outer membrane and peptidoglycan binding are required for full activity. Once activated by certain cell stress, the dimeric YfiB transforms from a compact conformation to a stretched conformation, allowing the periplasmic domain of the membrane-anchored YfiB to penetrate the cell wall and sequester the YfiR dimer. GMP enhances the binding affinity between YfiB and YfiR. Its function is as follows. Activates the diguanylate cyclase TpbB/YfiN by sequestering YfiR at the outer membrane, which counteracts the YfiR-mediated repression of TpbB/YfiN at the inner membrane and leads to increased c-di-GMP production. May act as a sensor of envelope stress. Part of the YfiB-TpbB-YfiR (or yfiBNR) system, encoding a tripartite signaling module that modulates intracellular c-di-GMP levels. The system is a key regulator of the small colony variant (SCV) phenotype, and plays an important role in biofilm formation and in vivo persistence. The c-di-GMP produced by TpbB/YfiN stimulates the production of the Pel and Psl exopolysaccharides, which promotes surface attachment, generates an SCV phenotype and confers resistance against phagocytosis. The polypeptide is Outer-membrane lipoprotein YfiB (Pseudomonas aeruginosa (strain ATCC 15692 / DSM 22644 / CIP 104116 / JCM 14847 / LMG 12228 / 1C / PRS 101 / PAO1)).